The following is a 268-amino-acid chain: Small ribosomal subunit protein uS3 (268 aa).

The KH type-2 domain maps to 38–106; that stretch reads IRKLLATGME…QVQLNILEVK (69 aa). Residues 217–268 form a disordered region; the sequence is NTAAPAGDRPRRERPSRPRRSGATGTTATSTEAGRAATATADAPATEQNQEG. Over residues 237–268 the composition is skewed to low complexity; it reads SGATGTTATSTEAGRAATATADAPATEQNQEG.

This sequence belongs to the universal ribosomal protein uS3 family. As to quaternary structure, part of the 30S ribosomal subunit. Forms a tight complex with proteins S10 and S14.

In terms of biological role, binds the lower part of the 30S subunit head. Binds mRNA in the 70S ribosome, positioning it for translation. The sequence is that of Small ribosomal subunit protein uS3 from Rhodococcus erythropolis (strain PR4 / NBRC 100887).